The following is a 301-amino-acid chain: MLSEVLEMLAVRPDGIYVDCTFGRGGHSRAILERLGPEGRLLAIDRDLEAVAAAGATGLSADARFGIEHGRFSDVGRFVGARGWTGRVDGILMDLGVSSPQLDNARRGFSFLRAGPLDMRMDPTQKTTAAEWLAEVSERELARVLRDYGEERFAGRIARAVVEERRRRPIVTTTDLVRLIEAAIPFKDKFKHPATRTFQAIRIAVNDELGQLQQGLNEAVEVLAAGGRLVVISFHSLEDRIVKRFMRDEARGREMAGGIFETRSCPRLAVLGKPLKAGDDEIRINPRARSALLRAAEKRAA.

S-adenosyl-L-methionine contacts are provided by residues 25 to 27, Asp-45, Phe-72, Asp-94, and Gln-101; that span reads GGH.

The protein belongs to the methyltransferase superfamily. RsmH family.

The protein resides in the cytoplasm. It carries out the reaction cytidine(1402) in 16S rRNA + S-adenosyl-L-methionine = N(4)-methylcytidine(1402) in 16S rRNA + S-adenosyl-L-homocysteine + H(+). Functionally, specifically methylates the N4 position of cytidine in position 1402 (C1402) of 16S rRNA. This Methylococcus capsulatus (strain ATCC 33009 / NCIMB 11132 / Bath) protein is Ribosomal RNA small subunit methyltransferase H.